Consider the following 448-residue polypeptide: Lipoamide acyltransferase component of branched-chain alpha-keto acid dehydrogenase complex, mitochondrial (448 aa).

Residues 30–105 (VVQFKLSDIG…RVGQALIDVE (76 aa)) enclose the Lipoyl-binding domain. Lys71 is modified (N6-lipoyllysine). Disordered regions lie at residues 108–146 (GNVEEPEQPKKEAASSSPEAPKSSAPKAPESAHSEGKVL) and 191–211 (TSGSTNIRTTHQAPQPSSKSY). The span at 121-136 (ASSSPEAPKSSAPKAP) shows a compositional bias: low complexity. In terms of domain architecture, Peripheral subunit-binding (PSBD) spans 146–183 (LATPAVRRIAIENKIKLAEVRGTGKDGRVLKEDVLKFL). Over residues 191-210 (TSGSTNIRTTHQAPQPSSKS) the composition is skewed to polar residues. CoA-binding residues include Arg257, Ser272, Asp315, Ser365, Asn366, Gly390, and Ile392. Catalysis depends on residues His418 and Asp422.

Belongs to the 2-oxoacid dehydrogenase family. (R)-lipoate serves as cofactor. Ubiquitously expressed.

The protein localises to the mitochondrion matrix. It localises to the cytoplasm. The protein resides in the cytosol. It is found in the cell projection. Its subcellular location is the dendrite. The protein localises to the cilium. It carries out the reaction N(6)-[(R)-dihydrolipoyl]-L-lysyl-[protein] + 2-methylpropanoyl-CoA = N(6)-[(R)-S(8)-2-methylpropanoyldihydrolipoyl]-L-lysyl-[protein] + CoA. The branched-chain alpha-keto dehydrogenase complex catalyzes the overall conversion of alpha-keto acids to acyl-CoA and CO(2). It contains multiple copies of three enzymatic components: branched-chain alpha-keto acid decarboxylase (E1), lipoamide acyltransferase (E2) and lipoamide dehydrogenase (E3). Within this complex, the catalytic function of this enzyme is to accept, and to transfer to coenzyme A, acyl groups that are generated by the branched-chain alpha-keto acid decarboxylase component. Required for the catabolism of branched-chain amino acids and the subsequent synthesis of monomethyl branched-chain fatty acids, which are important for regulating postembryonic growth. The sequence is that of Lipoamide acyltransferase component of branched-chain alpha-keto acid dehydrogenase complex, mitochondrial from Caenorhabditis elegans.